Here is a 733-residue protein sequence, read N- to C-terminus: Photosystem I P700 chlorophyll a apoprotein A2 (733 aa).

8 helical membrane passes run 46–69 (IFAS…FHVA), 135–158 (LYNG…LHLQ), 175–199 (LNHH…HVAI), 273–291 (MAHH…GHQY), 330–353 (LHFQ…QHMY), 369–395 (AALY…IFFI), 417–439 (AIIS…LYVH), and 516–534 (FLVH…LILV). The [4Fe-4S] cluster site is built by Cys-558 and Cys-567. 2 helical membrane passes run 574 to 595 (AFYL…YFHW) and 642 to 664 (LSVW…MFLI). Residues His-653, Met-661, and Tyr-669 each contribute to the chlorophyll a site. Trp-670 is a phylloquinone binding site. Residues 706 to 726 (LVGLTHFAVGFVLTYAAFVIA) traverse the membrane as a helical segment.

Belongs to the PsaA/PsaB family. As to quaternary structure, the PsaA/B heterodimer binds the P700 chlorophyll special pair and subsequent electron acceptors. PSI consists of a core antenna complex that captures photons, and an electron transfer chain that converts photonic excitation into a charge separation. The eukaryotic PSI reaction center is composed of at least 11 subunits. P700 is a chlorophyll a/chlorophyll a' dimer, A0 is one or more chlorophyll a, A1 is one or both phylloquinones and FX is a shared 4Fe-4S iron-sulfur center. serves as cofactor.

The protein resides in the plastid. It is found in the chloroplast thylakoid membrane. The enzyme catalyses reduced [plastocyanin] + hnu + oxidized [2Fe-2S]-[ferredoxin] = oxidized [plastocyanin] + reduced [2Fe-2S]-[ferredoxin]. In terms of biological role, psaA and PsaB bind P700, the primary electron donor of photosystem I (PSI), as well as the electron acceptors A0, A1 and FX. PSI is a plastocyanin/cytochrome c6-ferredoxin oxidoreductase, converting photonic excitation into a charge separation, which transfers an electron from the donor P700 chlorophyll pair to the spectroscopically characterized acceptors A0, A1, FX, FA and FB in turn. Oxidized P700 is reduced on the lumenal side of the thylakoid membrane by plastocyanin or cytochrome c6. This chain is Photosystem I P700 chlorophyll a apoprotein A2, found in Ostreococcus tauri.